A 144-amino-acid polypeptide reads, in one-letter code: Small ribosomal subunit protein uS12 (144 aa).

A 3-methylthioaspartic acid modification is found at Asp-103. The tract at residues 121–144 is disordered; it reads VANRKQGRSKYGTKKASAVPAKKK.

Belongs to the universal ribosomal protein uS12 family. As to quaternary structure, part of the 30S ribosomal subunit. Contacts proteins S8 and S17. May interact with IF1 in the 30S initiation complex.

Functionally, with S4 and S5 plays an important role in translational accuracy. In terms of biological role, interacts with and stabilizes bases of the 16S rRNA that are involved in tRNA selection in the A site and with the mRNA backbone. Located at the interface of the 30S and 50S subunits, it traverses the body of the 30S subunit contacting proteins on the other side and probably holding the rRNA structure together. The combined cluster of proteins S8, S12 and S17 appears to hold together the shoulder and platform of the 30S subunit. This is Small ribosomal subunit protein uS12 from Roseiflexus castenholzii (strain DSM 13941 / HLO8).